The primary structure comprises 293 residues: Elongation factor Ts (293 aa).

An involved in Mg(2+) ion dislocation from EF-Tu region spans residues 80-83; sequence TDFV.

It belongs to the EF-Ts family.

The protein resides in the cytoplasm. Its function is as follows. Associates with the EF-Tu.GDP complex and induces the exchange of GDP to GTP. It remains bound to the aminoacyl-tRNA.EF-Tu.GTP complex up to the GTP hydrolysis stage on the ribosome. The polypeptide is Elongation factor Ts (Herminiimonas arsenicoxydans).